Reading from the N-terminus, the 476-residue chain is Bifunctional protein HldE (476 aa).

Residues Met1 to Ser319 form a ribokinase region. ATP is bound at residue Asn195 to Glu198. The active site involves Asp264. Residues Met345–Gln476 are cytidylyltransferase.

It in the N-terminal section; belongs to the carbohydrate kinase PfkB family. In the C-terminal section; belongs to the cytidylyltransferase family. In terms of assembly, homodimer.

It carries out the reaction D-glycero-beta-D-manno-heptose 7-phosphate + ATP = D-glycero-beta-D-manno-heptose 1,7-bisphosphate + ADP + H(+). The catalysed reaction is D-glycero-beta-D-manno-heptose 1-phosphate + ATP + H(+) = ADP-D-glycero-beta-D-manno-heptose + diphosphate. Its pathway is nucleotide-sugar biosynthesis; ADP-L-glycero-beta-D-manno-heptose biosynthesis; ADP-L-glycero-beta-D-manno-heptose from D-glycero-beta-D-manno-heptose 7-phosphate: step 1/4. The protein operates within nucleotide-sugar biosynthesis; ADP-L-glycero-beta-D-manno-heptose biosynthesis; ADP-L-glycero-beta-D-manno-heptose from D-glycero-beta-D-manno-heptose 7-phosphate: step 3/4. Catalyzes the phosphorylation of D-glycero-D-manno-heptose 7-phosphate at the C-1 position to selectively form D-glycero-beta-D-manno-heptose-1,7-bisphosphate. Functionally, catalyzes the ADP transfer from ATP to D-glycero-beta-D-manno-heptose 1-phosphate, yielding ADP-D-glycero-beta-D-manno-heptose. The chain is Bifunctional protein HldE from Shewanella baltica (strain OS195).